The following is a 202-amino-acid chain: Potassium-transporting ATPase KdpC subunit (202 aa).

A helical membrane pass occupies residues 7 to 27 (PAIFVLLALTLITGLLYPLAM). Residues 66–103 (FHGRPSATSTADPNDSTKTVPAPYNAANSSGSNLGPTS) form a disordered region. Polar residues-rich tracts occupy residues 71 to 84 (SATS…STKT) and 91 to 101 (AANSSGSNLGP).

Belongs to the KdpC family. The system is composed of three essential subunits: KdpA, KdpB and KdpC.

Its subcellular location is the cell inner membrane. Part of the high-affinity ATP-driven potassium transport (or Kdp) system, which catalyzes the hydrolysis of ATP coupled with the electrogenic transport of potassium into the cytoplasm. This subunit acts as a catalytic chaperone that increases the ATP-binding affinity of the ATP-hydrolyzing subunit KdpB by the formation of a transient KdpB/KdpC/ATP ternary complex. In Bradyrhizobium sp. (strain ORS 278), this protein is Potassium-transporting ATPase KdpC subunit.